The sequence spans 532 residues: MTEPRVNPNCRLEDQGITGLGNVHYNLLEPALIDAAIQRGEGKLGLGGTFLVSTGAHTGRSPKDKHVVRTPAVEDSIWWENNRPMEPEAFDRLHADMLEHMKGKDYFVQDLYGGADPALRLDVRVVTELAWHGLFIRNLLRRPEASELAGFLPEFTIINCPSFKADPARHGCRSETVIALNFDKKLILIGNTAYAGENKKSVFTLLNYILPEKGVMPMHCSANHALGNPNDSAIFFGLSGTGKTTLSADPSRTLIGDDEHGWSDNGIFNFEGGCYAKTINLSAEAEPEIYATCFKFGTVIENMVYDPDTLELDFEDNSLTDNMRCAYPLEQISNASETSLGGQPRNVIMLTCDAYGVLPPIARLTPAQAMYHFLSGFTSKTPGTEVGVTEPTPTFSTCFGAPFMPRRPEVYGKLLQEKIAKTGAACWLVNTGWTGGAFGTGKRMPIKATRALLTAALDGSLNDAQFRKDPNFGFEVPVSVPGVEDKLLDPRQTWTDGAAYDAQARKLVGMFSDNFAQYADKIDDDVRAAAIG.

Residues R60, Y194, and K200 each coordinate substrate. ATP contacts are provided by residues K200, H219, and 237 to 245 (GLSGTGKTT). Residues K200 and H219 each coordinate Mn(2+). A Mn(2+)-binding site is contributed by D258. The ATP site is built by E286, R324, and T449. Residue R324 coordinates substrate.

This sequence belongs to the phosphoenolpyruvate carboxykinase (ATP) family. The cofactor is Mn(2+).

The protein resides in the cytoplasm. The catalysed reaction is oxaloacetate + ATP = phosphoenolpyruvate + ADP + CO2. It participates in carbohydrate biosynthesis; gluconeogenesis. Involved in the gluconeogenesis. Catalyzes the conversion of oxaloacetate (OAA) to phosphoenolpyruvate (PEP) through direct phosphoryl transfer between the nucleoside triphosphate and OAA. This is Phosphoenolpyruvate carboxykinase (ATP) from Paracoccus denitrificans (strain Pd 1222).